The sequence spans 531 residues: MTKYIIITGGVLSSVGKGTVAASIGLLLKNRGYKITMVKVDPYLNVDAGTMNPYMHGEVFVTDDGAETDLDLGHYERFVGINMYSYNNITAGKVYFEVIKNERQGKYLGQTVQIIPHVTDQIKSMIRYASNMANADITIVEIGGTVGDIEGLPFLEAVRQLKLEEEEGNVVFVHVALVEFLKVTEEIKTKPLQHSVQELRRIGIQPDIIVARSVVPLDEETKKKIALFTNVKPEYIFSNYDVNMTYEVPLILEKQGLASKILSKLNLPDNQPNLSEWIRFIDNLKTADKEVKIALVGKYTKLKDSYISIKEAIYHAAAKLHIKPVLVWIESTDIENSKEAIDKLKSVDGIIVLPGFGSRGVEGKILAIKYARENNVPFLGICYGMQLAVVEFARNVLGLEKAHTTEVDPNTPHPVITLLDEQKKVVQIGGTMRLGSQKVIVKEGTLAYRIYGNIEVYERHRHRYEVNPEYVDLLQKGGLVISGVSENGLVEMIELKNHKFFLGLQGHPEYKSRPLAPSPVFIGFLRAAAGV.

Positions 1-267 (MTKYIIITGG…ASKILSKLNL (267 aa)) are amidoligase domain. Serine 13 contributes to the CTP binding site. Serine 13 is a binding site for UTP. Residue 14–19 (SVGKGT) participates in ATP binding. Tyrosine 54 contacts L-glutamine. ATP is bound at residue aspartate 71. Residues aspartate 71 and glutamate 141 each contribute to the Mg(2+) site. Residues 148-150 (DIE), 188-193 (KTKPLQ), and lysine 224 contribute to the CTP site. Residues 188 to 193 (KTKPLQ) and lysine 224 each bind UTP. Residues 292 to 531 (KIALVGKYTK…IGFLRAAAGV (240 aa)) enclose the Glutamine amidotransferase type-1 domain. Glycine 355 provides a ligand contact to L-glutamine. The Nucleophile; for glutamine hydrolysis role is filled by cysteine 382. Residues 383-386 (YGMQ), glutamate 406, and arginine 463 contribute to the L-glutamine site. Residues histidine 507 and glutamate 509 contribute to the active site.

Belongs to the CTP synthase family. In terms of assembly, homotetramer.

The enzyme catalyses UTP + L-glutamine + ATP + H2O = CTP + L-glutamate + ADP + phosphate + 2 H(+). It carries out the reaction L-glutamine + H2O = L-glutamate + NH4(+). The catalysed reaction is UTP + NH4(+) + ATP = CTP + ADP + phosphate + 2 H(+). The protein operates within pyrimidine metabolism; CTP biosynthesis via de novo pathway; CTP from UDP: step 2/2. With respect to regulation, allosterically activated by GTP, when glutamine is the substrate; GTP has no effect on the reaction when ammonia is the substrate. The allosteric effector GTP functions by stabilizing the protein conformation that binds the tetrahedral intermediate(s) formed during glutamine hydrolysis. Inhibited by the product CTP, via allosteric rather than competitive inhibition. Catalyzes the ATP-dependent amination of UTP to CTP with either L-glutamine or ammonia as the source of nitrogen. Regulates intracellular CTP levels through interactions with the four ribonucleotide triphosphates. The sequence is that of CTP synthase from Sulfurisphaera tokodaii (strain DSM 16993 / JCM 10545 / NBRC 100140 / 7) (Sulfolobus tokodaii).